A 145-amino-acid chain; its full sequence is Large ribosomal subunit protein uL11 (145 aa).

The protein belongs to the universal ribosomal protein uL11 family. Part of the ribosomal stalk of the 50S ribosomal subunit. Interacts with L10 and the large rRNA to form the base of the stalk. L10 forms an elongated spine to which L12 dimers bind in a sequential fashion forming a multimeric L10(L12)X complex. One or more lysine residues are methylated.

Forms part of the ribosomal stalk which helps the ribosome interact with GTP-bound translation factors. The polypeptide is Large ribosomal subunit protein uL11 (Coxiella burnetii (strain CbuK_Q154) (Coxiella burnetii (strain Q154))).